The chain runs to 148 residues: Deoxyuridine 5'-triphosphate nucleotidohydrolase (148 aa).

Substrate-binding positions include 67–69, N80, 84–86, and M94; these read RSG and LID.

This sequence belongs to the dUTPase family. Mg(2+) is required as a cofactor.

The catalysed reaction is dUTP + H2O = dUMP + diphosphate + H(+). Its pathway is pyrimidine metabolism; dUMP biosynthesis; dUMP from dCTP (dUTP route): step 2/2. This enzyme is involved in nucleotide metabolism: it produces dUMP, the immediate precursor of thymidine nucleotides and it decreases the intracellular concentration of dUTP so that uracil cannot be incorporated into DNA. The protein is Deoxyuridine 5'-triphosphate nucleotidohydrolase of Francisella philomiragia subsp. philomiragia (strain ATCC 25017 / CCUG 19701 / FSC 153 / O#319-036).